The following is a 198-amino-acid chain: Glycerol-3-phosphate acyltransferase 3 (198 aa).

The next 4 helical transmembrane spans lie at 4-24 (TYLLFIVAYLLGSIPFALVVG), 71-91 (LPMVFGLDIHPLWFGLAAVLG), 113-133 (LLCYSPVVFAILAVVFFTLLF), and 147-167 (VVAVIASIVTGDKIFIIAMCL).

Belongs to the PlsY family. As to quaternary structure, probably interacts with PlsX.

The protein resides in the cell membrane. The catalysed reaction is an acyl phosphate + sn-glycerol 3-phosphate = a 1-acyl-sn-glycero-3-phosphate + phosphate. Its pathway is lipid metabolism; phospholipid metabolism. Its function is as follows. Catalyzes the transfer of an acyl group from acyl-phosphate (acyl-PO(4)) to glycerol-3-phosphate (G3P) to form lysophosphatidic acid (LPA). This enzyme utilizes acyl-phosphate as fatty acyl donor, but not acyl-CoA or acyl-ACP. In Bacillus anthracis, this protein is Glycerol-3-phosphate acyltransferase 3.